A 309-amino-acid chain; its full sequence is Dihydroorotate dehydrogenase B (NAD(+)), catalytic subunit (309 aa).

Residues serine 21 and 45 to 46 contribute to the FMN site; that span reads KA. Residues lysine 45 and 69–73 each bind substrate; that span reads NAIGL. Positions 99 and 127 each coordinate FMN. A substrate-binding site is contributed by asparagine 127. Cysteine 130 (nucleophile) is an active-site residue. The FMN site is built by lysine 165 and isoleucine 191. 192-193 provides a ligand contact to substrate; that stretch reads NT. Residues glycine 217, 243–244, and 265–266 each bind FMN; these read GG and GT.

It belongs to the dihydroorotate dehydrogenase family. Type 1 subfamily. Heterotetramer of 2 PyrK and 2 PyrD type B subunits. FMN serves as cofactor.

It localises to the cytoplasm. The catalysed reaction is (S)-dihydroorotate + NAD(+) = orotate + NADH + H(+). It participates in pyrimidine metabolism; UMP biosynthesis via de novo pathway; orotate from (S)-dihydroorotate (NAD(+) route): step 1/1. Catalyzes the conversion of dihydroorotate to orotate with NAD(+) as electron acceptor. This chain is Dihydroorotate dehydrogenase B (NAD(+)), catalytic subunit (pyrD), found in Bacillus cereus (strain ATCC 14579 / DSM 31 / CCUG 7414 / JCM 2152 / NBRC 15305 / NCIMB 9373 / NCTC 2599 / NRRL B-3711).